The chain runs to 914 residues: Coatomer subunit beta' (914 aa).

WD repeat units lie at residues 13–54 (SRSD…KDFE), 55–94 (VCDVPVRSARFVARKNWILTGSDDMQIRVFNYNTLEKVHS), 97–136 (AHSDYLRCIAVHPTQPLVLTSSDDMLIKLWNWEKMWACQR), 140–180 (GHTH…ANFT), 183–224 (GHEK…CVQT), 227–266 (GHAQNISAVCFHPELPIVLTGSEDGTVRIWHSGTYRLETC), and 352–390 (ACEIYPQTIAHNPNGRFVVVCGDGEYIIYTSMALRNKAF).

It belongs to the WD repeat COPB2 family. In terms of assembly, oligomeric complex that consists of at least the alpha, beta, beta', gamma, delta, epsilon and zeta subunits.

The protein resides in the cytoplasm. Its subcellular location is the golgi apparatus membrane. The protein localises to the cytoplasmic vesicle. It localises to the COPI-coated vesicle membrane. The coatomer is a cytosolic protein complex that binds to dilysine motifs and reversibly associates with Golgi non-clathrin-coated vesicles, which further mediate biosynthetic protein transport from the ER, via the Golgi up to the trans Golgi network. Coatomer complex is required for budding from Golgi membranes, and is essential for the retrograde Golgi-to-ER transport of dilysine-tagged proteins. The protein is Coatomer subunit beta' of Drosophila melanogaster (Fruit fly).